The primary structure comprises 2055 residues: Multiple PDZ domain protein (2055 aa).

The L27 domain maps to 1–63 (MLETIDKNRA…SLQQLKDQVN (63 aa)). Residues 138-225 (IFELLKPPCG…TVQLVIARGS (88 aa)) form the PDZ 1 domain. Position 231 is a phosphoserine (serine 231). In terms of domain architecture, PDZ 2 spans 258 to 338 (TIELVNDGSG…RVKLMIARGA (81 aa)). Over residues 348–360 (LGITLSSSTSSTS) the composition is skewed to low complexity. The disordered stretch occupies residues 348-372 (LGITLSSSTSSTSEMRVDASTQKND). 3 PDZ domains span residues 378 to 464 (DVEL…MRKG), 546 to 627 (VAHV…CRRT), and 693 to 779 (SIEL…VAKP). Phosphoserine is present on residues serine 783 and serine 1066. The region spanning 996–1077 (TVTIAKGSSS…IGPDIKITYV (82 aa)) is the PDZ 6 domain. Positions 1111 to 1130 (PELPEREEGEGEESELQNAA) are disordered. Positions 1139–1231 (RVELWREPSK…PVVFMVQSII (93 aa)) constitute a PDZ 7 domain. An Omega-N-methylarginine modification is found at arginine 1158. Positions 1264–1274 (LTTDQAPSQSE) are enriched in polar residues. The disordered stretch occupies residues 1264-1299 (LTTDQAPSQSESETEKPALCNVPPSSPSVFSEMGSD). The region spanning 1338–1421 (VIELEKGQSG…KVKIIFIRNA (84 aa)) is the PDZ 8 domain. The segment covering 1435 to 1445 (ADSPSSTSDSP) has biased composition (low complexity). Positions 1435–1459 (ADSPSSTSDSPQNKEVEPCSTTSAS) are disordered. Residues 1471-1552 (QLELPKDQGG…TVKLTVRAEN (82 aa)) form the PDZ 9 domain. A disordered region spans residues 1557–1597 (AVPSSAVTVSGERKDNSQTPAVPAPDLEPIPSTSRSSTPAV). 2 PDZ domains span residues 1614-1697 (TIEI…YRDE) and 1710-1792 (TIEL…GRVK). The segment at 1795–1834 (PFHSERRPSQSSQVSESSLSSFTPPLSGINTSESLESNSK) is disordered. Phosphoserine is present on residues serine 1803 and serine 1809. Residues 1803–1815 (SQSSQVSESSLSS) are compositionally biased toward low complexity. Positions 1816–1834 (FTPPLSGINTSESLESNSK) are enriched in polar residues. 2 PDZ domains span residues 1847–1933 (TVEI…VAGG) and 1972–2055 (TITL…MVLS).

As to quaternary structure, interacts with CLDN5, DLG4, GRIN1, SYNGAP1, CAMK2A and CAMK2B, HTR2A, HTR2B, HTR2C, PLEKHA1/TAPP1 and PLEKHA2/TAPP2. Interacts with F11R/JAM, CLDN1, NG2, CXADR, CRB1, MPP4 and PALS1. Interacts with FAT4 (via cytoplasmic domain). Interacts with DLL1. In the brain, it is strongly expressed in the choroid plexus. Within the hippocampal formation, strongest expression was seen in the soma of CA1-4 pyramidal cells. Expressed in most neocortical regions with the strongest expression in piriform cortex and amygdaloid nuclei but also detected in the subiculum and olfactory bulb. In the cerebellum, the highest level of expression was found in Purkinje cells. Moderately expressed in the granular layer and molecular layer. Expressed in the pontine nuclei, parts of spinal trigeminal nuclei, and the principal sensory trigeminal nuclei of the metencephalon. Expressed in all thalamic and hypothalamic nuclei, and the substantia nigra (at protein level). Ubiquitously expressed.

The protein resides in the cell membrane. It localises to the apical cell membrane. Its subcellular location is the postsynaptic density. It is found in the cell projection. The protein localises to the dendrite. The protein resides in the cell junction. It localises to the tight junction. Its subcellular location is the synapse. It is found in the synaptosome. Functionally, member of the NMDAR signaling complex that may play a role in control of AMPAR potentiation and synaptic plasticity in excitatory synapses. Promotes clustering of HT2RC at the cell surface. The polypeptide is Multiple PDZ domain protein (Mpdz) (Mus musculus (Mouse)).